A 323-amino-acid chain; its full sequence is tRNA U34 carboxymethyltransferase (323 aa).

Carboxy-S-adenosyl-L-methionine contacts are provided by residues Lys91, Trp105, Lys110, Gly130, 152–154 (DPS), 181–182 (IE), Met196, Tyr200, and Arg315.

This sequence belongs to the class I-like SAM-binding methyltransferase superfamily. CmoB family. In terms of assembly, homotetramer.

The catalysed reaction is carboxy-S-adenosyl-L-methionine + 5-hydroxyuridine(34) in tRNA = 5-carboxymethoxyuridine(34) in tRNA + S-adenosyl-L-homocysteine + H(+). Functionally, catalyzes carboxymethyl transfer from carboxy-S-adenosyl-L-methionine (Cx-SAM) to 5-hydroxyuridine (ho5U) to form 5-carboxymethoxyuridine (cmo5U) at position 34 in tRNAs. This chain is tRNA U34 carboxymethyltransferase, found in Vibrio atlanticus (strain LGP32) (Vibrio splendidus (strain Mel32)).